Reading from the N-terminus, the 98-residue chain is NADH-ubiquinone oxidoreductase chain 4L (98 aa).

A run of 3 helical transmembrane segments spans residues 1–21 (MTLI…GLLM), 29–49 (ALLC…LTIL), and 61–81 (IILL…LVMV).

This sequence belongs to the complex I subunit 4L family. Core subunit of respiratory chain NADH dehydrogenase (Complex I) which is composed of 45 different subunits.

It localises to the mitochondrion inner membrane. It carries out the reaction a ubiquinone + NADH + 5 H(+)(in) = a ubiquinol + NAD(+) + 4 H(+)(out). Core subunit of the mitochondrial membrane respiratory chain NADH dehydrogenase (Complex I) which catalyzes electron transfer from NADH through the respiratory chain, using ubiquinone as an electron acceptor. Part of the enzyme membrane arm which is embedded in the lipid bilayer and involved in proton translocation. In Balaenoptera bonaerensis (Antarctic minke whale), this protein is NADH-ubiquinone oxidoreductase chain 4L (MT-ND4L).